A 165-amino-acid polypeptide reads, in one-letter code: Putative pre-16S rRNA nuclease (165 aa).

This sequence belongs to the YqgF nuclease family.

The protein localises to the cytoplasm. Its function is as follows. Could be a nuclease involved in processing of the 5'-end of pre-16S rRNA. In Sinorhizobium medicae (strain WSM419) (Ensifer medicae), this protein is Putative pre-16S rRNA nuclease.